The following is a 299-amino-acid chain: GTPase Era (299 aa).

The 168-residue stretch at 4–171 (KSGFVAILGR…ISLLTDNLEE (168 aa)) folds into the Era-type G domain. Positions 12-19 (GRPNVGKS) are G1. 12-19 (GRPNVGKS) is a binding site for GTP. The interval 38-42 (QTTRN) is G2. A G3 region spans residues 59-62 (DTPG). Residues 59-63 (DTPGI) and 121-124 (NKID) contribute to the GTP site. The segment at 121–124 (NKID) is G4. The G5 stretch occupies residues 150–152 (ISA). Positions 202-280 (TQQEIPHSVA…YLETWVKVKK (79 aa)) constitute a KH type-2 domain.

This sequence belongs to the TRAFAC class TrmE-Era-EngA-EngB-Septin-like GTPase superfamily. Era GTPase family. Monomer.

It localises to the cytoplasm. The protein localises to the cell membrane. An essential GTPase that binds both GDP and GTP, with rapid nucleotide exchange. Plays a role in 16S rRNA processing and 30S ribosomal subunit biogenesis and possibly also in cell cycle regulation and energy metabolism. This chain is GTPase Era, found in Streptococcus uberis (strain ATCC BAA-854 / 0140J).